Reading from the N-terminus, the 203-residue chain is MSRYTGPSWKRSRRLGISLSGTGKELARRNYAPGQHGPNSRGRLSEYGQQLHEKQKLRWMYGLNERQFRTLFIRAGKIREGQHGINFMILLERRLDSIVYRLGLATTREQARQLVNHGHITVDGKRVDIPSYEVSVGQTIGLKDKSKNLQQIRDALEATTARPSFVSFDENKMEGTLVRLPERDEMEPEIDESLVVEWYNKLL.

The region spanning 93–155 (RRLDSIVYRL…SKNLQQIRDA (63 aa)) is the S4 RNA-binding domain.

This sequence belongs to the universal ribosomal protein uS4 family. In terms of assembly, part of the 30S ribosomal subunit. Contacts protein S5. The interaction surface between S4 and S5 is involved in control of translational fidelity.

In terms of biological role, one of the primary rRNA binding proteins, it binds directly to 16S rRNA where it nucleates assembly of the body of the 30S subunit. With S5 and S12 plays an important role in translational accuracy. In Lactobacillus acidophilus (strain ATCC 700396 / NCK56 / N2 / NCFM), this protein is Small ribosomal subunit protein uS4.